The chain runs to 294 residues: Nucleotide-binding protein NT01CX_1284 (294 aa).

Residue 8–15 (GLSGAGKS) participates in ATP binding. 59-62 (DIRG) contributes to the GTP binding site.

Belongs to the RapZ-like family.

Its function is as follows. Displays ATPase and GTPase activities. The protein is Nucleotide-binding protein NT01CX_1284 of Clostridium novyi (strain NT).